A 206-amino-acid polypeptide reads, in one-letter code: Isochorismatase domain-containing protein 2A (206 aa).

An N6-succinyllysine modification is found at Lys-26. N6-acetyllysine; alternate is present on residues Lys-93 and Lys-178. Residues Lys-93 and Lys-178 each carry the N6-succinyllysine; alternate modification. An N6-acetyllysine mark is found at Lys-182 and Lys-185.

This sequence belongs to the isochorismatase family. As to quaternary structure, interacts with CDKN2A. In terms of tissue distribution, ubiquitous. Expressed predominantly in uterus, stomach and urinary tract.

It localises to the cytoplasm. The protein resides in the nucleus. This Mus musculus (Mouse) protein is Isochorismatase domain-containing protein 2A.